The primary structure comprises 801 residues: Mitochondrial intermediate peptidase (801 aa).

The transit peptide at 1 to 41 (MKPQLLTPLRRRPWTCRQCLQRLQRLQQQTRRSFETAASPA) directs the protein to the mitochondrion. The segment at 31–54 (RRSFETAASPAPGHTQVDYIPADA) is disordered. Histidine 565 contacts Zn(2+). Glutamate 566 is a catalytic residue. 2 residues coordinate Zn(2+): histidine 569 and histidine 572.

The protein belongs to the peptidase M3 family. Zn(2+) serves as cofactor.

It localises to the mitochondrion matrix. It carries out the reaction Release of an N-terminal octapeptide as second stage of processing of some proteins imported into the mitochondrion.. Cleaves proteins, imported into the mitochondrion, to their mature size. While most mitochondrial precursor proteins are processed to the mature form in one step by mitochondrial processing peptidase (MPP), the sequential cleavage by MIP of an octapeptide after initial processing by MPP is a required step for a subgroup of nuclear-encoded precursor proteins destined for the matrix or the inner membrane. The chain is Mitochondrial intermediate peptidase (oct1) from Aspergillus clavatus (strain ATCC 1007 / CBS 513.65 / DSM 816 / NCTC 3887 / NRRL 1 / QM 1276 / 107).